Consider the following 454-residue polypeptide: MNLKEKNVLVIGFAVTGIPLVKVLCQLGANVIVNDSKKEEALKESMKLLSDHPIQYILGKHPEIEELSAPLDLVVVSPGVPLDIPFIENLRARGIEIIGEIELAYRLAQGHIVAITGTNGKTTTTSLVGEIFKNAGRRTHVVGNIGVAFISKALETTADDVIVIEASSFQLESIVDFRPQVGAILNLTPDHLNRHKTMENYQKAKFNIFKNQGAEDIAVINYDDVKLREESKQIYAKKVYFSRRTLLEEGVFVEDGKIVALKDGHKKEIISKDDIFIPGNHNLENALAATAMTLSLGVDIDVIQHTLKTFKGVEHRTEIVDVIHGVRFINDSKGTNPDASIKGIEGINTPILLIAGGYDKGSDFDEFINAFDGKVKHMFVYGETANTLMETAKKLNFIDVTKVQNLDEAVKKAYDIAIQGDTVLLSPACASWDMYENFEMRGKHFKEIVANLRR.

117–123 (GTNGKTT) serves as a coordination point for ATP.

The protein belongs to the MurCDEF family.

It is found in the cytoplasm. The enzyme catalyses UDP-N-acetyl-alpha-D-muramoyl-L-alanine + D-glutamate + ATP = UDP-N-acetyl-alpha-D-muramoyl-L-alanyl-D-glutamate + ADP + phosphate + H(+). It participates in cell wall biogenesis; peptidoglycan biosynthesis. Functionally, cell wall formation. Catalyzes the addition of glutamate to the nucleotide precursor UDP-N-acetylmuramoyl-L-alanine (UMA). This is UDP-N-acetylmuramoylalanine--D-glutamate ligase from Alkaliphilus oremlandii (strain OhILAs) (Clostridium oremlandii (strain OhILAs)).